The chain runs to 91 residues: ATP-dependent Clp protease adapter protein ClpS (91 aa).

It belongs to the ClpS family. As to quaternary structure, binds to the N-terminal domain of the chaperone ClpA.

Involved in the modulation of the specificity of the ClpAP-mediated ATP-dependent protein degradation. The sequence is that of ATP-dependent Clp protease adapter protein ClpS from Synechococcus sp. (strain ATCC 27144 / PCC 6301 / SAUG 1402/1) (Anacystis nidulans).